Reading from the N-terminus, the 332-residue chain is Glyceraldehyde-3-phosphate dehydrogenase (332 aa).

NAD(+)-binding positions include 10–11 (RI), aspartate 32, and methionine 77. D-glyceraldehyde 3-phosphate contacts are provided by residues 148–150 (SCT), threonine 179, 208–209 (TG), and arginine 231. Cysteine 149 functions as the Nucleophile in the catalytic mechanism. Residue asparagine 313 coordinates NAD(+).

This sequence belongs to the glyceraldehyde-3-phosphate dehydrogenase family. Homotetramer.

The protein localises to the cytoplasm. It catalyses the reaction D-glyceraldehyde 3-phosphate + phosphate + NAD(+) = (2R)-3-phospho-glyceroyl phosphate + NADH + H(+). Its pathway is carbohydrate degradation; glycolysis; pyruvate from D-glyceraldehyde 3-phosphate: step 1/5. The protein is Glyceraldehyde-3-phosphate dehydrogenase (GPDA) of Phytophthora infestans (Potato late blight agent).